A 284-amino-acid chain; its full sequence is 2-dehydro-3-deoxyphosphooctonate aldolase (284 aa).

Belongs to the KdsA family.

Its subcellular location is the cytoplasm. It carries out the reaction D-arabinose 5-phosphate + phosphoenolpyruvate + H2O = 3-deoxy-alpha-D-manno-2-octulosonate-8-phosphate + phosphate. Its pathway is carbohydrate biosynthesis; 3-deoxy-D-manno-octulosonate biosynthesis; 3-deoxy-D-manno-octulosonate from D-ribulose 5-phosphate: step 2/3. The protein operates within bacterial outer membrane biogenesis; lipopolysaccharide biosynthesis. This is 2-dehydro-3-deoxyphosphooctonate aldolase from Yersinia enterocolitica serotype O:8 / biotype 1B (strain NCTC 13174 / 8081).